The primary structure comprises 406 residues: S-adenosylmethionine synthase (406 aa).

H5 provides a ligand contact to ATP. D7 lines the Mg(2+) pocket. Residue E33 participates in K(+) binding. L-methionine contacts are provided by E46 and Q89. Positions 89–99 are flexible loop; that stretch reads QSPDIAQGVDT. ATP contacts are provided by residues 164–166, 240–241, D249, 255–256, A272, and K276; these read DGK, KF, and RK. D249 provides a ligand contact to L-methionine. L-methionine is bound at residue K280.

The protein belongs to the AdoMet synthase family. Homotetramer; dimer of dimers. Mg(2+) serves as cofactor. The cofactor is K(+).

It is found in the cytoplasm. It carries out the reaction L-methionine + ATP + H2O = S-adenosyl-L-methionine + phosphate + diphosphate. It participates in amino-acid biosynthesis; S-adenosyl-L-methionine biosynthesis; S-adenosyl-L-methionine from L-methionine: step 1/1. Functionally, catalyzes the formation of S-adenosylmethionine (AdoMet) from methionine and ATP. The overall synthetic reaction is composed of two sequential steps, AdoMet formation and the subsequent tripolyphosphate hydrolysis which occurs prior to release of AdoMet from the enzyme. The sequence is that of S-adenosylmethionine synthase from Synechococcus sp. (strain ATCC 27144 / PCC 6301 / SAUG 1402/1) (Anacystis nidulans).